Here is a 124-residue protein sequence, read N- to C-terminus: S-adenosylmethionine decarboxylase proenzyme (124 aa).

Ser-63 (schiff-base intermediate with substrate; via pyruvic acid) is an active-site residue. Ser-63 is modified (pyruvic acid (Ser); by autocatalysis). The active-site Proton acceptor; for processing activity is His-68. The Proton donor; for catalytic activity role is filled by Cys-83.

Belongs to the prokaryotic AdoMetDC family. Type 1 subfamily. As to quaternary structure, heterotetramer of two alpha and two beta chains arranged as a dimer of alpha/beta heterodimers. Pyruvate serves as cofactor. In terms of processing, is synthesized initially as an inactive proenzyme. Formation of the active enzyme involves a self-maturation process in which the active site pyruvoyl group is generated from an internal serine residue via an autocatalytic post-translational modification. Two non-identical subunits are generated from the proenzyme in this reaction, and the pyruvate is formed at the N-terminus of the alpha chain, which is derived from the carboxyl end of the proenzyme. The post-translation cleavage follows an unusual pathway, termed non-hydrolytic serinolysis, in which the side chain hydroxyl group of the serine supplies its oxygen atom to form the C-terminus of the beta chain, while the remainder of the serine residue undergoes an oxidative deamination to produce ammonia and the pyruvoyl group blocking the N-terminus of the alpha chain.

It catalyses the reaction S-adenosyl-L-methionine + H(+) = S-adenosyl 3-(methylsulfanyl)propylamine + CO2. It participates in amine and polyamine biosynthesis; S-adenosylmethioninamine biosynthesis; S-adenosylmethioninamine from S-adenosyl-L-methionine: step 1/1. Catalyzes the decarboxylation of S-adenosylmethionine to S-adenosylmethioninamine (dcAdoMet), the propylamine donor required for the synthesis of the polyamines spermine and spermidine from the diamine putrescine. The sequence is that of S-adenosylmethionine decarboxylase proenzyme from Caldanaerobacter subterraneus subsp. tengcongensis (strain DSM 15242 / JCM 11007 / NBRC 100824 / MB4) (Thermoanaerobacter tengcongensis).